The chain runs to 465 residues: MYKRDTIAAIATCPNGGGVSILRLSGSKSIDVVKTVSLVSSNQCWHSHCILYGWIKDNEDQSFVDEVLILLMMAPRSYTAENVVEIHCHASIVLANEILRILVKQGVRLAKPGEFTMRAFLNGRIGLSQVESVLKVIHSKTIASAKLAANTLRRGGSERIRRLKHTLSLLLADLEFHIDFSDEFIDVDSIEDELRSTIQSSLLDIKDLISSYNKVSKLNEGTKVCIIGKPNVGKSSLLNAIAKRECSIVTNFPGTTRDIVSFETMLGNTLVRLYDTAGIRQSVDEIEKIGISKTELFVDECQIVFFVLDAIQGLSSEDSVIFNKLNLMNKNFVILINKIDKKVQRKIDEIYETLKCSNRRIIEVSAIKNIGLEKLNNCILDLSSKEDFDLPVHFSVNCKYLEILNNIYLILDELYTGSLNKSVTSYDFIAVELRRVLQGLNQITGDEVVENNVLDAIFSKFCVGK.

Arg-23, Glu-85, and Arg-124 together coordinate (6S)-5-formyl-5,6,7,8-tetrahydrofolate. The region spanning 221 to 384 is the TrmE-type G domain; that stretch reads GTKVCIIGKP…LNNCILDLSS (164 aa). GTP contacts are provided by residues 231–236, 250–256, and 275–278; these read NVGKSS, TNFPGTT, and DTAG. Residues Ser-235 and Thr-256 each contribute to the Mg(2+) site. Lys-465 contacts (6S)-5-formyl-5,6,7,8-tetrahydrofolate.

It belongs to the TRAFAC class TrmE-Era-EngA-EngB-Septin-like GTPase superfamily. TrmE GTPase family. K(+) serves as cofactor.

The protein localises to the plastid. It localises to the chloroplast. In terms of biological role, exhibits a very high intrinsic GTPase hydrolysis rate. Involved in the addition of a carboxymethylaminomethyl (cmnm) group at the wobble position (U34) of certain tRNAs, forming tRNA-cmnm(5)s(2)U34. The sequence is that of Probable tRNA modification GTPase MnmE from Cyanidium caldarium (Red alga).